Here is a 365-residue protein sequence, read N- to C-terminus: N5-carboxyaminoimidazole ribonucleotide synthase (365 aa).

Residues Arg-102, Lys-143, 148–154, 177–180, Glu-185, and 256–257 each bind ATP; these read GYDGKGQ, EEYV, and NE. Residues 106 to 286 enclose the ATP-grasp domain; sequence KLFYRQHNLP…QFEQHLRAII (181 aa).

It belongs to the PurK/PurT family. Homodimer.

The catalysed reaction is 5-amino-1-(5-phospho-beta-D-ribosyl)imidazole + hydrogencarbonate + ATP = 5-carboxyamino-1-(5-phospho-D-ribosyl)imidazole + ADP + phosphate + 2 H(+). Its pathway is purine metabolism; IMP biosynthesis via de novo pathway; 5-amino-1-(5-phospho-D-ribosyl)imidazole-4-carboxylate from 5-amino-1-(5-phospho-D-ribosyl)imidazole (N5-CAIR route): step 1/2. In terms of biological role, catalyzes the ATP-dependent conversion of 5-aminoimidazole ribonucleotide (AIR) and HCO(3)(-) to N5-carboxyaminoimidazole ribonucleotide (N5-CAIR). The protein is N5-carboxyaminoimidazole ribonucleotide synthase of Saccharolobus solfataricus (strain ATCC 35092 / DSM 1617 / JCM 11322 / P2) (Sulfolobus solfataricus).